Reading from the N-terminus, the 76-residue chain is Liver-expressed antimicrobial peptide 2 (76 aa).

The first 22 residues, methionine 1–serine 22, serve as a signal peptide directing secretion. Positions serine 23–arginine 36 are excised as a propeptide. Disulfide bonds link cysteine 53–cysteine 64 and cysteine 59–cysteine 69.

It belongs to the LEAP2 family.

Its subcellular location is the secreted. In terms of biological role, has an antimicrobial activity. The chain is Liver-expressed antimicrobial peptide 2 (Leap2) from Mus musculus (Mouse).